The primary structure comprises 73 residues: Plasticin-A1 (73 aa).

The signal sequence occupies residues 1–22 (MAFLKKSLFLVLFLAIVPLSIC). The propeptide occupies 23–42 (EEEKREEENEEKQEDDDQSE). Positions 25-45 (EKREEENEEKQEDDDQSEKRG) are disordered. Residues 30-40 (ENEEKQEDDDQ) show a composition bias toward acidic residues. Gly70 carries the post-translational modification Glycine amide. Residues 72-73 (ES) constitute a propeptide that is removed on maturation.

It belongs to the frog skin active peptide (FSAP) family. Plasticin subfamily. As to expression, expressed by the skin glands.

It is found in the secreted. Its subcellular location is the target cell membrane. Peptide with no antimicrobial activity. May act in synergy with cationic peptides by enhancing their activity. Has a moderate hemolytic activity. This is Plasticin-A1 from Agalychnis annae (Blue-sided leaf frog).